The following is a 423-amino-acid chain: Glycine amidinotransferase, mitochondrial (423 aa).

A mitochondrion-targeting transit peptide spans 1 to 43 (MLRVRCLRGGSRGAEALHYIGSRLGRTVTGWVQRTFQSTQAAT). Phosphoserine is present on residues serine 46 and serine 49. Residue aspartate 170 participates in arginine binding. Residues aspartate 254 and histidine 303 contribute to the active site. Arginine contacts are provided by aspartate 305, arginine 322, serine 354, and serine 355. The residue at position 385 (lysine 385) is an N6-acetyllysine. The active-site Amidino-cysteine intermediate is cysteine 407.

This sequence belongs to the amidinotransferase family. Homodimer.

It is found in the mitochondrion inner membrane. The enzyme catalyses L-arginine + glycine = guanidinoacetate + L-ornithine. It carries out the reaction 4-aminobutanoate + L-arginine = 4-guanidinobutanoate + L-ornithine. The catalysed reaction is beta-alanine + L-arginine = 3-guanidinopropanoate + L-ornithine. It catalyses the reaction taurine + L-arginine = taurocyamine + L-ornithine. It participates in amine and polyamine biosynthesis; creatine biosynthesis; creatine from L-arginine and glycine: step 1/2. Functionally, transamidinase that catalyzes the transfer of the amidino group of L-arginine onto the amino moiety of acceptor metabolites such as glycine, beta-alanine, gamma-aminobutyric acid (GABA) and taurine yielding the corresponding guanidine derivatives. Catalyzes the rate-limiting step of creatine biosynthesis, namely the transfer of the amidino group from L-arginine to glycine to generate guanidinoacetate, which is then methylated by GAMT to form creatine. Provides creatine as a source for ATP generation in tissues with high energy demands, in particular skeletal muscle, heart and brain. The chain is Glycine amidinotransferase, mitochondrial (GATM) from Bos taurus (Bovine).